The following is a 479-amino-acid chain: Cardiolipin synthase (479 aa).

Helical transmembrane passes span 5 to 25 and 34 to 54; these read SLLL…IIFL and WAWV…YLIF. PLD phosphodiesterase domains are found at residues 216–243 and 392–419; these read INYR…GDEY and QNGF…DVRS. Catalysis depends on residues His221, Lys223, Asp228, His397, Lys399, and Asp404.

It belongs to the phospholipase D family. Cardiolipin synthase subfamily.

Its subcellular location is the cell membrane. It catalyses the reaction 2 a 1,2-diacyl-sn-glycero-3-phospho-(1'-sn-glycerol) = a cardiolipin + glycerol. Functionally, catalyzes the reversible phosphatidyl group transfer from one phosphatidylglycerol molecule to another to form cardiolipin (CL) (diphosphatidylglycerol) and glycerol. The polypeptide is Cardiolipin synthase (cls) (Oceanobacillus iheyensis (strain DSM 14371 / CIP 107618 / JCM 11309 / KCTC 3954 / HTE831)).